The sequence spans 298 residues: Uricase (298 aa).

Catalysis depends on charge relay system residues K18 and T63. Urate contacts are provided by T63, D64, F165, R182, V229, Q230, and N256. H258 (charge relay system) is an active-site residue. Positions 296–298 match the Microbody targeting signal motif; it reads ARM.

The protein belongs to the uricase family. In terms of assembly, homotetramer; dimer of dimers.

It localises to the peroxisome. It carries out the reaction urate + O2 + H2O = 5-hydroxyisourate + H2O2. The protein operates within purine metabolism; urate degradation; (S)-allantoin from urate: step 1/3. Competitively inhibited by xanthine. Catalyzes the oxidation of uric acid to 5-hydroxyisourate, which is further processed to form (S)-allantoin. This is Uricase from Danio rerio (Zebrafish).